The chain runs to 398 residues: MAKLTVKDVDLKGKKVLVRVDFNVPLKDGVITNDNRITAALPTIKYIIEQGGRAILFSHLGRVKEESDKAGKSLAPVAADLAAKLGQDVVFPGVTRGAELEAAINALEDGQVLLVENTRYEDVDGKKESKNDPELGKYWASLGDGIFVNDAFGTAHRAHASNVGISANVEKAVAGFLLENEIAYIQEAVETPERPFVAILGGSKVSDKIGVIENLLEKADKVLIGGGMTYTFYKAQGIEIGNSLVEEDKLDVAKALLEKANGKLILPVDSKEANAFAGYTEVRDTEGEAVSEGFLGLDIGPKSIAKFDEALTGAKTVVWNGPMGVFENPDFQAGTIGVMDAIVKQPGVKSIIGGGDSAAAAINLGRADKFSWISTGGGASMELLEGKVLPGLAALTEK.

Substrate contacts are provided by residues 21–23, R36, 59–62, R119, and R157; these read DFN and HLGR. ATP-binding positions include K208, G296, E327, and 354–357; that span reads GGDS.

Belongs to the phosphoglycerate kinase family. Monomer.

It localises to the cytoplasm. It carries out the reaction (2R)-3-phosphoglycerate + ATP = (2R)-3-phospho-glyceroyl phosphate + ADP. It participates in carbohydrate degradation; glycolysis; pyruvate from D-glyceraldehyde 3-phosphate: step 2/5. The protein is Phosphoglycerate kinase of Streptococcus pneumoniae serotype 2 (strain D39 / NCTC 7466).